A 158-amino-acid chain; its full sequence is Transcriptional regulatory protein DoeX (158 aa).

Residues Leu3 to Arg64 enclose the HTH asnC-type domain. A DNA-binding region (H-T-H motif) is located at residues Lys22 to Arg41.

The protein resides in the cytoplasm. Functionally, acts as a transcriptional regulator. It binds DNA specifically to a fragment from the doeA promoter region. The protein is Transcriptional regulatory protein DoeX (doeX) of Halomonas elongata (strain ATCC 33173 / DSM 2581 / NBRC 15536 / NCIMB 2198 / 1H9).